The chain runs to 126 residues: Histone H2B 3 (126 aa).

Residues 1–12 (MPEPAKSAPAPK) show a composition bias toward low complexity. Positions 1 to 34 (MPEPAKSAPAPKKGSKKAVTKTQKKGDKKRRKTR) are disordered. Lys-6 and Lys-13 each carry N6-acetyllysine. Basic residues predominate over residues 13–34 (KGSKKAVTKTQKKGDKKRRKTR). Ser-15 carries the phosphoserine modification. An N6-acetyllysine mark is found at Lys-16 and Lys-21. Ser-113 carries O-linked (GlcNAc) serine glycosylation. Lys-121 is covalently cross-linked (Glycyl lysine isopeptide (Lys-Gly) (interchain with G-Cter in ubiquitin)).

This sequence belongs to the histone H2B family. The nucleosome is a histone octamer containing two molecules each of H2A, H2B, H3 and H4 assembled in one H3-H4 heterotetramer and two H2A-H2B heterodimers. The octamer wraps approximately 147 bp of DNA. In terms of processing, monoubiquitination of Lys-121 by the BRE1 gives a specific tag for epigenetic transcriptional activation and is also prerequisite for histone H3 'Lys-4' and 'Lys-79' methylation. Phosphorylated on Ser-15 during apoptosis; which facilitates apoptotic chromatin condensation. Post-translationally, glcNAcylation at Ser-113 promotes monoubiquitination of Lys-121. It fluctuates in response to extracellular glucose, and associates with transcribed genes.

The protein resides in the nucleus. It is found in the chromosome. Its function is as follows. Core component of nucleosome. Nucleosomes wrap and compact DNA into chromatin, limiting DNA accessibility to the cellular machineries which require DNA as a template. Histones thereby play a central role in transcription regulation, DNA repair, DNA replication and chromosomal stability. DNA accessibility is regulated via a complex set of post-translational modifications of histones, also called histone code, and nucleosome remodeling. The chain is Histone H2B 3 (hist2h2l) from Danio rerio (Zebrafish).